Here is a 91-residue protein sequence, read N- to C-terminus: MRNYEITNILREGNVEETKSAVKELLSKYNFTIQGEEDWGSKRLWHPVGQDEQGHFTLIKCSGSPTEVAKIEHEFKLNVNILKTLVIRANG.

The protein belongs to the bacterial ribosomal protein bS6 family.

Functionally, binds together with bS18 to 16S ribosomal RNA. This is Small ribosomal subunit protein bS6 from Leptospira biflexa serovar Patoc (strain Patoc 1 / Ames).